The primary structure comprises 111 residues: Resistin-like alpha (111 aa).

Residues 1-23 (MKTTTCSLLICISLLQLMVPVNT) form the signal peptide. 5 disulfide bridges follow: C55–C108, C67–C107, C76–C93, C78–C95, and C82–C97.

This sequence belongs to the resistin/FIZZ family. In terms of assembly, monomer. Highest levels in adipose tissue.

The protein localises to the secreted. In terms of biological role, probable hormone. Plays a role in pulmonary vascular remodeling. The protein is Resistin-like alpha (Retnla) of Mus musculus (Mouse).